Here is a 72-residue protein sequence, read N- to C-terminus: MKLTCVVIVAVLLLTACQLITAEDSRGAQKHRTLRSTARRSKSELTTRCRPSGSPCGVTSICCGRCYRGKCT.

The first 22 residues, 1 to 22 (MKLTCVVIVAVLLLTACQLITA), serve as a signal peptide directing secretion. Residues 23-48 (EDSRGAQKHRTLRSTARRSKSELTTR) constitute a propeptide that is removed on maturation. 3 disulfides stabilise this stretch: C49-C63, C56-C66, and C62-C71. P55 carries the post-translational modification 4-hydroxyproline.

It belongs to the conotoxin O1 superfamily. In terms of tissue distribution, expressed by the venom duct.

Its subcellular location is the secreted. Functionally, omega-conotoxins act at presynaptic membranes, they bind and block voltage-gated calcium channels (Cav). This is Omega-conotoxin-like SVIA mutant 1 from Conus striatus (Striated cone).